The following is a 258-amino-acid chain: Phosphoadenosine 5'-phosphosulfate reductase (258 aa).

The active-site Nucleophile; cysteine thiosulfonate intermediate is the cysteine 244.

The protein belongs to the PAPS reductase family. CysH subfamily.

It is found in the cytoplasm. It catalyses the reaction [thioredoxin]-disulfide + sulfite + adenosine 3',5'-bisphosphate + 2 H(+) = [thioredoxin]-dithiol + 3'-phosphoadenylyl sulfate. Its pathway is sulfur metabolism; hydrogen sulfide biosynthesis; sulfite from sulfate: step 3/3. In terms of biological role, catalyzes the formation of sulfite from phosphoadenosine 5'-phosphosulfate (PAPS) using thioredoxin as an electron donor. The polypeptide is Phosphoadenosine 5'-phosphosulfate reductase (Vibrio vulnificus (strain YJ016)).